The chain runs to 93 residues: N-acetyl-S-hydroxy-L-cysteine reductase (93 aa).

The Glutaredoxin domain maps to 1–93 (MSDVVNIVVW…NHAQIKEAKR (93 aa)). C15 and C18 form a disulfide bridge.

This sequence belongs to the glutaredoxin family.

It catalyses the reaction N-acetyl-S-hydroxy-L-cysteine + AH2 = N-acetyl-L-cysteine + A + H2O. It functions in the pathway amino-acid metabolism. Its function is as follows. Involved in a cysteine salvage pathway from S-alkylcysteine. Catalyzes the reduction of N-acetyl-S-hydroxy-L-cysteine (N-acetyl-L-cysteine sulfenic acid) to N-acetyl-L-cysteine. This pathway is likely important in the catabolism of alkylated cysteine generated by proteolysis of alkylated glutathione formed in the detoxification of a wide range of electrophiles. The sequence is that of N-acetyl-S-hydroxy-L-cysteine reductase from Bacillus subtilis (strain 168).